Consider the following 371-residue polypeptide: 4-hydroxy-3-methylbut-2-en-1-yl diphosphate synthase (flavodoxin) (371 aa).

[4Fe-4S] cluster contacts are provided by Cys270, Cys273, Cys305, and Glu312.

The protein belongs to the IspG family. [4Fe-4S] cluster serves as cofactor.

The catalysed reaction is (2E)-4-hydroxy-3-methylbut-2-enyl diphosphate + oxidized [flavodoxin] + H2O + 2 H(+) = 2-C-methyl-D-erythritol 2,4-cyclic diphosphate + reduced [flavodoxin]. The protein operates within isoprenoid biosynthesis; isopentenyl diphosphate biosynthesis via DXP pathway; isopentenyl diphosphate from 1-deoxy-D-xylulose 5-phosphate: step 5/6. In terms of biological role, converts 2C-methyl-D-erythritol 2,4-cyclodiphosphate (ME-2,4cPP) into 1-hydroxy-2-methyl-2-(E)-butenyl 4-diphosphate. In Chromohalobacter salexigens (strain ATCC BAA-138 / DSM 3043 / CIP 106854 / NCIMB 13768 / 1H11), this protein is 4-hydroxy-3-methylbut-2-en-1-yl diphosphate synthase (flavodoxin).